A 119-amino-acid chain; its full sequence is Basic phospholipase A2 homolog 1 (119 aa).

Intrachain disulfides connect cysteine 11/cysteine 72, cysteine 27/cysteine 118, cysteine 29/cysteine 45, cysteine 44/cysteine 99, cysteine 51/cysteine 92, cysteine 61/cysteine 85, and cysteine 79/cysteine 90. Positions 107–117 (KENYNIDPKKR) are important for membrane-damaging activities in eukaryotes and bacteria; heparin-binding.

It belongs to the phospholipase A2 family. Group I subfamily. D49 sub-subfamily. Expressed by the venom gland.

It localises to the secreted. This is Basic phospholipase A2 homolog 1 from Notechis scutatus scutatus (Mainland tiger snake).